A 298-amino-acid chain; its full sequence is Nucleotide-binding protein RSKD131_3085 (298 aa).

11–18 provides a ligand contact to ATP; it reads GPSGAGRT. Residue 58–61 coordinates GTP; that stretch reads DVRN.

It belongs to the RapZ-like family.

Functionally, displays ATPase and GTPase activities. In Cereibacter sphaeroides (strain KD131 / KCTC 12085) (Rhodobacter sphaeroides), this protein is Nucleotide-binding protein RSKD131_3085.